The chain runs to 125 residues: Small ribosomal subunit protein uS13 (125 aa).

The interval 91–125 (HRRGLPARGQRTRTNARTRKGKRKTVAGKKKAGKK) is disordered.

Belongs to the universal ribosomal protein uS13 family. In terms of assembly, part of the 30S ribosomal subunit. Forms a loose heterodimer with protein S19. Forms two bridges to the 50S subunit in the 70S ribosome.

Its function is as follows. Located at the top of the head of the 30S subunit, it contacts several helices of the 16S rRNA. In the 70S ribosome it contacts the 23S rRNA (bridge B1a) and protein L5 of the 50S subunit (bridge B1b), connecting the 2 subunits; these bridges are implicated in subunit movement. Contacts the tRNAs in the A and P-sites. The protein is Small ribosomal subunit protein uS13 of Chloroherpeton thalassium (strain ATCC 35110 / GB-78).